The chain runs to 228 residues: MSGGIKQWPEDERPREKLLKRGAKALSDAELLALIIGTGDSSSGRSALDIGREMLQDFGGLRNLAHATASEICRIKGAGPAKAACIKAALELANRYGARRFESLERFTSPSQVFEHFHHEFRDHRKEYFLTLLLDGKNRILKRVQISEGSLNQSIVHPREVFNQAVRESAAAIILVHNHPTGDPTPSREDIDITRRLREAGDLLGIKVLDHIIIGDGSFLSFVDRGMM.

An MPN domain is found at 106 to 228; sequence RFTSPSQVFE…FLSFVDRGMM (123 aa). Residues histidine 177, histidine 179, and aspartate 190 each coordinate Zn(2+). A JAMM motif motif is present at residues 177 to 190; that stretch reads HNHPTGDPTPSRED.

Belongs to the UPF0758 family.

In Geotalea uraniireducens (strain Rf4) (Geobacter uraniireducens), this protein is UPF0758 protein Gura_4138.